The primary structure comprises 116 residues: Large ribosomal subunit protein bL21c (116 aa).

This sequence belongs to the bacterial ribosomal protein bL21 family. In terms of assembly, part of the 50S ribosomal subunit.

The protein localises to the plastid. The protein resides in the chloroplast. In terms of biological role, this protein binds to 23S rRNA. The chain is Large ribosomal subunit protein bL21c from Emiliania huxleyi (Coccolithophore).